Consider the following 219-residue polypeptide: Large ribosomal subunit protein bL25 (219 aa).

The segment at E195–K219 is disordered. Residues T197–P206 show a composition bias toward low complexity. Basic and acidic residues predominate over residues E207–K219.

It belongs to the bacterial ribosomal protein bL25 family. CTC subfamily. As to quaternary structure, part of the 50S ribosomal subunit; part of the 5S rRNA/L5/L18/L25 subcomplex. Contacts the 5S rRNA. Binds to the 5S rRNA independently of L5 and L18.

Functionally, this is one of the proteins that binds to the 5S RNA in the ribosome where it forms part of the central protuberance. This Fervidobacterium nodosum (strain ATCC 35602 / DSM 5306 / Rt17-B1) protein is Large ribosomal subunit protein bL25.